Consider the following 311-residue polypeptide: Acyl-CoA dehydrogenase IpdE2 (311 aa).

Arg-206 and Gly-273 together coordinate FAD.

This sequence belongs to the acyl-CoA dehydrogenase family. In terms of assembly, heterotetramer composed of 2 IpdE1 subunits and 2 IpdE2 subunits. The cofactor is FAD.

The catalysed reaction is 3-[(3aS,4S,5R,7aS)-5-hydroxy-7a-methyl-1-oxo-octahydro-1H-inden-4-yl]propanoyl-CoA + A = (2E)-3-[(3aS,4S,5R,7aS)-5-hydroxy-7a-methyl-1-oxo-octahydro-1H-inden-4-yl]prop-2-enoyl-CoA + AH2. The protein operates within steroid metabolism; cholesterol degradation. Its function is as follows. Involved in cholesterol degradation. Catalyzes the dehydrogenation of 5OH-HIP-CoA to 5OH-HIPE-CoA. This is Acyl-CoA dehydrogenase IpdE2 from Mycolicibacterium smegmatis (strain ATCC 700084 / mc(2)155) (Mycobacterium smegmatis).